The sequence spans 231 residues: Heptaprenylglyceryl phosphate synthase (231 aa).

Lys12 lines the sn-glycerol 1-phosphate pocket. Mg(2+) is bound by residues Asp14 and Thr40. Sn-glycerol 1-phosphate contacts are provided by residues 159–164 (YMEYSG), Gly189, and 209–210 (GN).

The protein belongs to the GGGP/HepGP synthase family. Group I subfamily. In terms of assembly, homodimer. It depends on Mg(2+) as a cofactor.

It carries out the reaction sn-glycerol 1-phosphate + all-trans-heptaprenyl diphosphate = 3-heptaprenyl-sn-glycero-1-phosphate + diphosphate. It participates in membrane lipid metabolism; glycerophospholipid metabolism. Prenyltransferase that catalyzes in vivo the transfer of the heptaprenyl moiety of heptaprenyl pyrophosphate (HepPP; 35 carbon atoms) to the C3 hydroxyl of sn-glycerol-1-phosphate (G1P), producing heptaprenylglyceryl phosphate (HepGP). This reaction is an ether-bond-formation step in the biosynthesis of archaea-type G1P-based membrane lipids found in Bacillales. The protein is Heptaprenylglyceryl phosphate synthase of Brevibacillus brevis (strain 47 / JCM 6285 / NBRC 100599).